Here is a 630-residue protein sequence, read N- to C-terminus: Amino acid transporter heavy chain SLC3A2 (630 aa).

Residue methionine 1 is modified to N-acetylmethionine. Residue glutamate 2 is modified to N-acetylserine. Glutamate 2 is modified (phosphoserine). Residues 15–39 form a disordered region; sequence IPRQLPGSHSEAGVQGLSAGDDSEL. Residues 102-184 are Cytoplasmic-facing; it reads MSQDTEVDMK…SPGWVRTRWA (83 aa). Serine 103 bears the Phosphoserine mark. Threonine 106 carries the post-translational modification Phosphothreonine. Serine 134 carries the post-translational modification Phosphoserine. Lysine 147 participates in a covalent cross-link: Glycyl lysine isopeptide (Lys-Gly) (interchain with G-Cter in ubiquitin). Residue serine 165 is modified to Phosphoserine. Lysine 166 participates in a covalent cross-link: Glycyl lysine isopeptide (Lys-Gly) (interchain with G-Cter in SUMO2). Residues 185-205 traverse the membrane as a helical; Signal-anchor for type II membrane protein segment; it reads LLLLFWLGWLGMLAGAVVIIV. Over 206–630 the chain is Extracellular; the sequence is RAPRCRELPA…GLLLRFPYAA (425 aa). N-linked (GlcNAc...) asparagine glycosylation is found at asparagine 365 and asparagine 381. A phosphoserine mark is found at serine 406, serine 408, and serine 410. Residue asparagine 424 is glycosylated (N-linked (GlcNAc...) (complex) asparagine). Asparagine 506 carries an N-linked (GlcNAc...) asparagine glycan. Serine 527 and serine 531 each carry phosphoserine.

As to quaternary structure, disulfide-linked heterodimer with a non-glycosylated catalytic light subunit (SLC7A5, SLC7A6, SLC7A7, SLC7A8, SLC7A10 or SLC7A11). Interacts with TLCD3A/CT120. Interacts with ICAM1. Constitutively and specifically associates with beta-1 integrins (alpha-2/beta-1, alpha-3/beta-1, alpha-5/beta-1 and alpha-6/beta-1), but minimally with alpha-4/beta-1. Interacts with LAPTM4B; recruits SLC3A2 and SLC7A5/LAT1 to lysosomes to promote leucine uptake into these organelles and is required for mTORC1 activation. (Microbial infection) Interacts with hepatitis C virus/HCV envelope glycoprotein E2; the interaction may facilitate viral entry into host cell. Post-translationally, N-glycosylated; N-glycosylation is crucial for trafficking and stability of SLC3A2 to the plasma membrane. In terms of processing, phosphorylation on Ser-406; Ser-408 or Ser-410 and on Ser-527 or Ser-531 by ecto-protein kinases favors heterotypic cell-cell interactions. In terms of tissue distribution, expressed ubiquitously in all tissues tested with highest levels detected in kidney, placenta and testis and weakest level in thymus. During gestation, expression in the placenta was significantly stronger at full-term than at the mid-trimester stage. Expressed in HUVECS and at low levels in resting peripheral blood T-lymphocytes and quiescent fibroblasts. Also expressed in fetal liver and in the astrocytic process of primary astrocytic gliomas. Expressed in retinal endothelial cells and in the intestinal epithelial cell line C2BBe1.

The protein resides in the apical cell membrane. It localises to the cell membrane. It is found in the cell junction. The protein localises to the lysosome membrane. Its subcellular location is the melanosome. The protein resides in the basolateral cell membrane. In terms of biological role, acts as a chaperone that facilitates biogenesis and trafficking of functional transporters heterodimers to the plasma membrane. Forms heterodimer with SLC7 family transporters (SLC7A5, SLC7A6, SLC7A7, SLC7A8, SLC7A10 and SLC7A11), a group of amino-acid antiporters. Heterodimers function as amino acids exchangers, the specificity of the substrate depending on the SLC7A subunit. Heterodimers SLC3A2/SLC7A6 or SLC3A2/SLC7A7 mediate the uptake of dibasic amino acids. Heterodimer SLC3A2/SLC7A11 functions as an antiporter by mediating the exchange of extracellular anionic L-cystine and intracellular L-glutamate across the cellular plasma membrane. SLC3A2/SLC7A10 translocates small neutral L- and D-amino acids across the plasma membrane. SLC3A2/SLC75 or SLC3A2/SLC7A8 translocates neutral amino acids with broad specificity, thyroid hormones and L-DOPA. SLC3A2 is essential for plasma membrane localization, stability, and the transport activity of SLC7A5 and SLC7A8. When associated with LAPTM4B, the heterodimer SLC7A5 is recruited to lysosomes to promote leucine uptake into these organelles, and thereby mediates mTORC1 activation. Modulates integrin-related signaling and is essential for integrin-dependent cell spreading, migration and tumor progression. Functionally, (Microbial infection) In case of hepatitis C virus/HCV infection, the complex formed by SLC3A2 and SLC7A5/LAT1 plays a role in HCV propagation by facilitating viral entry into host cell and increasing L-leucine uptake-mediated mTORC1 signaling activation, thereby contributing to HCV-mediated pathogenesis. (Microbial infection) Acts as a receptor for malaria parasite Plasmodium vivax (Thai isolate) in immature red blood cells. This is Amino acid transporter heavy chain SLC3A2 from Homo sapiens (Human).